Here is a 422-residue protein sequence, read N- to C-terminus: MATLKCIDWQFSGSEAAKDAAAASLGSYTSALYALCDPHGKPILPPRNEILETSNTAEKAVVKAVLYGSGNAYAPSLGLAAAKSAVAEYLNQGLPKKLTADDVFMTLGCKQAIELAVDILAKPKANVLLPSPGFPWDLVRSIYKNLEVRHYNFLPEKNFEIDFDSVRALVDENTFAIFIINPHNPNGNTYSEAHLKQLAELAKELKIMVVSDEVFRWTLFGSNPFVPMGKFSSIVPVVTLGSISKGWKVPGWRTGWLTLHDLDGVFRNTKVLQAAQDFLQINNNPPTVIQAAIPDILEKTPQEFFDKRQSFLKDKVEFGYSKLKYIPSLTCYMKPEACTFLWTELDLSSFVDIEDDQDFCNKLAKEENLVVLPGIAFSQKNWLRHSIDMETPVLEDALERLKSFCDRHSNKKAPLKDVNGVK.

This sequence belongs to the class-I pyridoxal-phosphate-dependent aminotransferase family. Homodimer. Pyridoxal 5'-phosphate serves as cofactor. As to expression, expressed in cotyledons, sepals, pistils, flower buds, phloem companion cells and vascular tissues of petiole, leaf, filament and fruit.

It carries out the reaction L-cystine + H2O = S-sulfanyl-L-cysteine + pyruvate + NH4(+). Functionally, possesses cystine lyase activity in vitro. Does not possess tyrosine aminotransferase, alanine aminotransferase, aspartate aminotransferase and tryptophan aminotransferase activities. The polypeptide is Cystine lyase CORI3 (Arabidopsis thaliana (Mouse-ear cress)).